A 227-amino-acid chain; its full sequence is MKSKLAITMVSALLLAACAVQEPPLVQGPTTAKPQPRPVGLPANGAIFQAASYRPMFQDAMPIQVGDTLQITIQENSSTSQSEQVTDTRTSGLSSNITAGVKIPFLPSGLASGLGGTSFNSSGSANNTGKGNNQVATTFVSSITVTVTDVLANGNLVVSGEKMVRINSDTESIRLSGVVNPRDVTPDRTVSSLKVADARIEQQTKGNNRLYNEPGWLSKIFMSLLPI.

The signal sequence occupies residues 1-17 (MKSKLAITMVSALLLAA). Residue Cys18 is the site of N-palmitoyl cysteine attachment. A lipid anchor (S-diacylglycerol cysteine) is attached at Cys18.

This sequence belongs to the FlgH family. As to quaternary structure, the basal body constitutes a major portion of the flagellar organelle and consists of four rings (L,P,S, and M) mounted on a central rod.

It localises to the cell outer membrane. The protein resides in the bacterial flagellum basal body. Assembles around the rod to form the L-ring and probably protects the motor/basal body from shearing forces during rotation. This chain is Flagellar L-ring protein 2, found in Chromobacterium violaceum (strain ATCC 12472 / DSM 30191 / JCM 1249 / CCUG 213 / NBRC 12614 / NCIMB 9131 / NCTC 9757 / MK).